The primary structure comprises 481 residues: Glutamate-1-semialdehyde 2,1-aminomutase, chloroplastic (481 aa).

Positions 18 to 40 are disordered; it reads NQTPKWGFSPSHRRCNPSSSSSA. At K321 the chain carries N6-(pyridoxal phosphate)lysine.

It belongs to the class-III pyridoxal-phosphate-dependent aminotransferase family. HemL subfamily. In terms of assembly, homodimer. Pyridoxal 5'-phosphate is required as a cofactor.

The protein resides in the plastid. The protein localises to the chloroplast. The catalysed reaction is (S)-4-amino-5-oxopentanoate = 5-aminolevulinate. The protein operates within porphyrin-containing compound metabolism; protoporphyrin-IX biosynthesis; 5-aminolevulinate from L-glutamyl-tRNA(Glu): step 2/2. It functions in the pathway porphyrin-containing compound metabolism; chlorophyll biosynthesis. This Solanum lycopersicum (Tomato) protein is Glutamate-1-semialdehyde 2,1-aminomutase, chloroplastic.